Here is a 515-residue protein sequence, read N- to C-terminus: Fibril protein (515 aa).

Met-1 carries the blocked amino end (Met) modification. Helical regions lie at residues 21-34 (VKKYWWKNCVIQHV), 206-228 (HKFKMYETVNTLKYLLRRLFNLL), 357-376 (KIETVETVANEIAAAIAEKC), and 426-440 (SNEFLKYLNEALKDV).

The protein localises to the cytoplasm. Its subcellular location is the cytoskeleton. Its function is as follows. Acts as a cytoskeletal structure involved in the shape and motility of spiroplasmas. The protein is Fibril protein of Spiroplasma citri.